A 41-amino-acid chain; its full sequence is Histone H3.2 (41 aa).

The segment at 1 to 41 is disordered; that stretch reads MARAKQTARKSTGAEAPRKQLASKAARKSAPATGGIKKPHR.

The protein belongs to the histone H3 family. In terms of assembly, the nucleosome is a histone octamer containing two molecules each of H2A, H2B, H3 and H4 assembled in one H3-H4 heterotetramer and two H2A-H2B heterodimers. The octamer wraps approximately 147 bp of DNA.

The protein resides in the nucleus. Its subcellular location is the chromosome. In terms of biological role, core component of nucleosome. Nucleosomes wrap and compact DNA into chromatin, limiting DNA accessibility to the cellular machineries which require DNA as a template. Histones thereby play a central role in transcription regulation, DNA repair, DNA replication and chromosomal stability. DNA accessibility is regulated via a complex set of post-translational modifications of histones, also called histone code, and nucleosome remodeling. This chain is Histone H3.2, found in Tetrahymena borealis.